The primary structure comprises 162 residues: Peptidyl-prolyl cis-trans isomerase (162 aa).

S2 carries the N-acetylserine modification. In terms of domain architecture, PPIase cyclophilin-type spans 5–161 (YFDVEADGQP…ARIVVAKSGE (157 aa)). Glycyl lysine isopeptide (Lys-Gly) (interchain with G-Cter in ubiquitin) cross-links involve residues K29 and K42. T71 bears the Phosphothreonine mark. Glycyl lysine isopeptide (Lys-Gly) (interchain with G-Cter in ubiquitin) cross-links involve residues K123 and K139. 2 positions are modified to phosphoserine: S142 and S145. Glycyl lysine isopeptide (Lys-Gly) (interchain with G-Cter in ubiquitin) cross-links involve residues K151 and K158.

It belongs to the cyclophilin-type PPIase family. PPIase A subfamily. In terms of assembly, interacts with a complex composed of SIN3 and RPD3. Identified in the Set3C complex with HOS2, HST1, SNT1, SIF2, HOS4/YIL112W and SET3.

Its subcellular location is the cytoplasm. The protein resides in the nucleus. It is found in the mitochondrion intermembrane space. It carries out the reaction [protein]-peptidylproline (omega=180) = [protein]-peptidylproline (omega=0). Binds cyclosporin A (CsA). CsA mediates some of its effects via an inhibitory action on PPIase. PPIases accelerate the folding of proteins. It catalyzes the cis-trans isomerization of proline imidic peptide bonds in oligopeptides. Involved in histone deacetylase complexes, suggesting a function in chromatin. Imports fructose-1,6-bisphosphatase (FBPase) into the intermediate vacuole import and degradation (Vid) vesicles. Regulates the meiotic gene program via the Set3C histone deacetylase complex to promote efficient sporulation, and the prolyl-isomerase activity is required for this function. This is Peptidyl-prolyl cis-trans isomerase (CPR1) from Saccharomyces cerevisiae (strain ATCC 204508 / S288c) (Baker's yeast).